The following is a 111-amino-acid chain: Rhodanese domain-containing protein CG4456 (111 aa).

Positions 12 to 110 constitute a Rhodanese domain; it reads NHPDVYLIDV…SWNEWAQKEG (99 aa).

The sequence is that of Rhodanese domain-containing protein CG4456 from Drosophila melanogaster (Fruit fly).